The primary structure comprises 152 residues: ESAT-6 secretion machinery protein EssA (152 aa).

At 1-114 (MLMNSVIALT…PYIQNKQEKK (114 aa)) the chain is on the cytoplasmic side. The disordered stretch occupies residues 62–83 (ERQQQIKNDMFQNQASHSTRLN). A compositionally biased stretch (polar residues) spans 66–80 (QIKNDMFQNQASHST). The helical transmembrane segment at 115 to 135 (IFPYILMSVGAFLTLGFVIFS) threads the bilayer. Residues 136–152 (IHKGRRTKNESARKSNI) lie on the Extracellular side of the membrane.

The protein belongs to the EssA family.

The protein localises to the cell membrane. Its function is as follows. Component of the ESAT-6 secretion system (Ess). Required for the secretion of EsxA and EsxB. This is ESAT-6 secretion machinery protein EssA from Staphylococcus aureus (strain COL).